A 241-amino-acid polypeptide reads, in one-letter code: Major microneme antigen (241 aa).

An N-terminal signal peptide occupies residues 1–34; sequence MTLPIHFPRCVLYGMASAVWSILFLHILVGDTMS. Residues 35–103 constitute a propeptide that is removed on maturation; sequence AADALSWSGG…ATGRGPSFVH (69 aa). Positions 64–83 are enriched in basic and acidic residues; that stretch reads GKELEQQHGGEEQQMQRDTK. The interval 64-90 is disordered; that stretch reads GKELEQQHGGEEQQMQRDTKPAAFSNP. PAN domains lie at 112–181 and 185–241; these read CFPH…PRSC and CTDN…VERA. Cystine bridges form between cysteine 112–cysteine 181, cysteine 137–cysteine 159, cysteine 141–cysteine 147, cysteine 185–cysteine 189, cysteine 210–cysteine 230, and cysteine 214–cysteine 220. Serine 121 contacts a carbohydrate. A carbohydrate-binding residues include lysine 162, tyrosine 169, and aspartate 174.

This sequence belongs to the microneme antigen family. As to quaternary structure, homodimer or heterodimer of major microneme antigen and microneme antigen. Post-translationally, contains six disulfide bonds.

Its subcellular location is the cytoplasmic vesicle. It is found in the secretory vesicle. The protein resides in the microneme. Galactose-binding lectin. Plays a role in adhesion to the host cell. Has a potential role in invasion of host cells. The polypeptide is Major microneme antigen (Sarcocystis muris).